The following is a 114-amino-acid chain: SNF1-related protein kinase regulatory subunit beta-3 (114 aa).

Residues 26–50 form a disordered region; that stretch reads SYNNVYSSTEDETRDPPAVPPHLQH. The tract at residues 40–114 is association with SNF1 complex (ASC); that stretch reads DPPAVPPHLQ…PVQRRGSANV (75 aa).

This sequence belongs to the 5'-AMP-activated protein kinase beta subunit family. As to quaternary structure, subunit of a probable heterotrimeric complex consisting of an alpha catalytic (KIN10 or KIN11) subunit, and a beta (KINB) and a gamma (KING or SNF4) non-catalytic regulatory subunits. Interacts with KIN10, KIN11 and SNF4. Interacts with FLZ1, FLZ2, FLZ3, FLZ4, FLZ5, FLZ7, FLZ8, FLZ10, FLZ13, FLZ14, FLZ15 and FLZ16. Expressed in rosette (at the protein level). Expressed in the whole plant and at the different developmental stage with a higher level in stems.

Functionally, regulatory subunit of the probable trimeric SNF1-related protein kinase (SnRK) complex, which may play a role in a signal transduction cascade regulating gene expression and carbohydrate metabolism in higher plants. The sequence is that of SNF1-related protein kinase regulatory subunit beta-3 (KINB3) from Arabidopsis thaliana (Mouse-ear cress).